A 164-amino-acid chain; its full sequence is ATP synthase subunit b (164 aa).

The helical transmembrane segment at 7-25 (SFWLAVSFIIFVYLIYRPA) threads the bilayer.

It belongs to the ATPase B chain family. In terms of assembly, F-type ATPases have 2 components, F(1) - the catalytic core - and F(0) - the membrane proton channel. F(1) has five subunits: alpha(3), beta(3), gamma(1), delta(1), epsilon(1). F(0) has three main subunits: a(1), b(2) and c(10-14). The alpha and beta chains form an alternating ring which encloses part of the gamma chain. F(1) is attached to F(0) by a central stalk formed by the gamma and epsilon chains, while a peripheral stalk is formed by the delta and b chains.

Its subcellular location is the cell inner membrane. Functionally, f(1)F(0) ATP synthase produces ATP from ADP in the presence of a proton or sodium gradient. F-type ATPases consist of two structural domains, F(1) containing the extramembraneous catalytic core and F(0) containing the membrane proton channel, linked together by a central stalk and a peripheral stalk. During catalysis, ATP synthesis in the catalytic domain of F(1) is coupled via a rotary mechanism of the central stalk subunits to proton translocation. Its function is as follows. Component of the F(0) channel, it forms part of the peripheral stalk, linking F(1) to F(0). In Rickettsia felis (strain ATCC VR-1525 / URRWXCal2) (Rickettsia azadi), this protein is ATP synthase subunit b.